Reading from the N-terminus, the 1235-residue chain is Major DNA-binding protein (1235 aa).

Residues 536–584 (GGLDGKGDDGVPGGGAGGGGGRDVSGGPSDGLGGGRGGGGGGDSGGMMG) form a disordered region. Positions 545–584 (GVPGGGAGGGGGRDVSGGPSDGLGGGRGGGGGGDSGGMMG) are enriched in gly residues. The Required for filament formation signature appears at 846–847 (FW). Gly residues predominate over residues 1214–1226 (GVGGSSGGGGGSG). The interval 1214–1235 (GVGGSSGGGGGSGLLPAKRSRL) is disordered. Residues 1232–1235 (RSRL) form a required for nuclear localization region.

It belongs to the herpesviridae major DNA-binding protein family. In terms of assembly, homooligomers. Forms double-helical filaments necessary for the formation of replication compartments within the host nucleus. Interacts with the origin-binding protein. Interacts with the helicase primase complex; this interaction stimulates primer synthesis activity of the helicase-primase complex. Interacts with the DNA polymerase. Interacts with the alkaline exonuclease; this interaction increases its nuclease processivity.

The protein resides in the host nucleus. Its function is as follows. Plays several crucial roles in viral infection. Participates in the opening of the viral DNA origin to initiate replication by interacting with the origin-binding protein. May disrupt loops, hairpins and other secondary structures present on ssDNA to reduce and eliminate pausing of viral DNA polymerase at specific sites during elongation. Promotes viral DNA recombination by performing strand-transfer, characterized by the ability to transfer a DNA strand from a linear duplex to a complementary single-stranded DNA circle. Can also catalyze the renaturation of complementary single strands. Additionally, reorganizes the host cell nucleus, leading to the formation of prereplicative sites and replication compartments. This process is driven by the protein which can form double-helical filaments in the absence of DNA. The chain is Major DNA-binding protein from Homo sapiens (Human).